Reading from the N-terminus, the 290-residue chain is MSNRLFFIKKCYNLAQLMRINQPIGFFLLLWPTLWGLWLSHKGIPDKVVLIVFVAGALCMRSAGCIINDYVDYDIDGHVQRTKTRPLPSGMIRKKEALVALSILLFIAFILVLSLNFITIFLSVVALILSWIYPYLKRYIYFPQVMLGLLFSWPILMAFTAINNPINSTAWLLFLMNTVWTIVYDTQYAMIDREDDIYVGIKSSAVLFGDMDKFLIGILQLCIVFILGIIGWKERFTVVFYFFSLFGVIILFMWQQILINKRKRIRYFQAFLSNNYVGMLVFIGIASSFH.

A run of 8 helical transmembrane segments spans residues 24-44 (IGFF…HKGI), 48-68 (VVLI…CIIN), 98-118 (LVAL…LNFI), 142-162 (FPQV…FTAI), 171-191 (WLLF…YAMI), 214-234 (FLIG…GWKE), 239-259 (VFYF…QILI), and 270-290 (AFLS…SSFH).

The protein belongs to the UbiA prenyltransferase family. It depends on Mg(2+) as a cofactor.

It localises to the cell inner membrane. The catalysed reaction is all-trans-octaprenyl diphosphate + 4-hydroxybenzoate = 4-hydroxy-3-(all-trans-octaprenyl)benzoate + diphosphate. Its pathway is cofactor biosynthesis; ubiquinone biosynthesis. Functionally, catalyzes the prenylation of para-hydroxybenzoate (PHB) with an all-trans polyprenyl group. Mediates the second step in the final reaction sequence of ubiquinone-8 (UQ-8) biosynthesis, which is the condensation of the polyisoprenoid side chain with PHB, generating the first membrane-bound Q intermediate 3-octaprenyl-4-hydroxybenzoate. The protein is 4-hydroxybenzoate octaprenyltransferase of Blochmanniella pennsylvanica (strain BPEN).